The following is a 133-amino-acid chain: Large ribosomal subunit protein bL17 (133 aa).

The protein belongs to the bacterial ribosomal protein bL17 family. As to quaternary structure, part of the 50S ribosomal subunit. Contacts protein L32.

The protein is Large ribosomal subunit protein bL17 of Nitratidesulfovibrio vulgaris (strain DSM 19637 / Miyazaki F) (Desulfovibrio vulgaris).